Here is a 417-residue protein sequence, read N- to C-terminus: uncharacterized protein (417 aa).

The protein to M.tuberculosis Rv2067c.

This is an uncharacterized protein from Synechococcus sp. (strain ATCC 27144 / PCC 6301 / SAUG 1402/1) (Anacystis nidulans).